The chain runs to 354 residues: Uroporphyrinogen decarboxylase (354 aa).

Substrate contacts are provided by residues 27 to 31, aspartate 77, tyrosine 154, serine 209, and histidine 327; that span reads RQAGR.

It belongs to the uroporphyrinogen decarboxylase family. Homodimer.

It is found in the cytoplasm. The enzyme catalyses uroporphyrinogen III + 4 H(+) = coproporphyrinogen III + 4 CO2. The protein operates within porphyrin-containing compound metabolism; protoporphyrin-IX biosynthesis; coproporphyrinogen-III from 5-aminolevulinate: step 4/4. Catalyzes the decarboxylation of four acetate groups of uroporphyrinogen-III to yield coproporphyrinogen-III. This is Uroporphyrinogen decarboxylase from Pseudomonas savastanoi pv. phaseolicola (strain 1448A / Race 6) (Pseudomonas syringae pv. phaseolicola (strain 1448A / Race 6)).